We begin with the raw amino-acid sequence, 202 residues long: ATP-dependent Clp protease proteolytic subunit (202 aa).

The Nucleophile role is filled by S106. Residue H131 is part of the active site.

The protein belongs to the peptidase S14 family. In terms of assembly, fourteen ClpP subunits assemble into 2 heptameric rings which stack back to back to give a disk-like structure with a central cavity, resembling the structure of eukaryotic proteasomes.

It is found in the cytoplasm. It catalyses the reaction Hydrolysis of proteins to small peptides in the presence of ATP and magnesium. alpha-casein is the usual test substrate. In the absence of ATP, only oligopeptides shorter than five residues are hydrolyzed (such as succinyl-Leu-Tyr-|-NHMec, and Leu-Tyr-Leu-|-Tyr-Trp, in which cleavage of the -Tyr-|-Leu- and -Tyr-|-Trp bonds also occurs).. Cleaves peptides in various proteins in a process that requires ATP hydrolysis. Has a chymotrypsin-like activity. Plays a major role in the degradation of misfolded proteins. The protein is ATP-dependent Clp protease proteolytic subunit of Acidovorax ebreus (strain TPSY) (Diaphorobacter sp. (strain TPSY)).